The sequence spans 444 residues: C4-dicarboxylate transport protein 2 (444 aa).

6 consecutive transmembrane segments (helical) span residues 23-43, 61-81, 95-115, 162-182, 198-218, and 236-256; these read ILYV…WLWP, LIKM…IAHI, LVYF…VANV, GEIL…MGLG, AMFG…FGAM, and LIAT…GIIA.

The protein belongs to the dicarboxylate/amino acid:cation symporter (DAACS) (TC 2.A.23) family.

It localises to the cell inner membrane. Responsible for the transport of dicarboxylates such as succinate, fumarate, and malate from the periplasm across the membrane. The sequence is that of C4-dicarboxylate transport protein 2 from Bradyrhizobium diazoefficiens (strain JCM 10833 / BCRC 13528 / IAM 13628 / NBRC 14792 / USDA 110).